The following is a 216-amino-acid chain: Probable transaldolase (216 aa).

Lys-83 serves as the catalytic Schiff-base intermediate with substrate.

This sequence belongs to the transaldolase family. Type 3B subfamily.

The protein resides in the cytoplasm. It catalyses the reaction D-sedoheptulose 7-phosphate + D-glyceraldehyde 3-phosphate = D-erythrose 4-phosphate + beta-D-fructose 6-phosphate. It functions in the pathway carbohydrate degradation; pentose phosphate pathway; D-glyceraldehyde 3-phosphate and beta-D-fructose 6-phosphate from D-ribose 5-phosphate and D-xylulose 5-phosphate (non-oxidative stage): step 2/3. Its function is as follows. Transaldolase is important for the balance of metabolites in the pentose-phosphate pathway. This is Probable transaldolase from Symbiobacterium thermophilum (strain DSM 24528 / JCM 14929 / IAM 14863 / T).